Consider the following 550-residue polypeptide: Methyl-accepting chemotaxis protein PcaY (550 aa).

Topologically, residues 1–19 are cytoplasmic; the sequence is MVPTRSTARMLANLKIRTG. The chain crosses the membrane as a helical span at residues 20–40; it reads MFWVLSLFSLTLLFSTASAWW. The Periplasmic portion of the chain corresponds to 41–198; the sequence is AALGSDQQIT…ESDRRLARAQ (158 aa). A ligand-binding domain region spans residues 44–196; sequence GSDQQITELD…MLESDRRLAR (153 aa). Positions 71 and 75 each coordinate benzoate. Residues Arg-71, Asn-75, and Tyr-135 each contribute to the salicylate site. A 3,4-dihydroxybenzoate-binding site is contributed by 71-78; the sequence is RSSANVSS. L-quinate-binding positions include 71–78, Tyr-135, Gln-142, and Asn-158; that span reads RSSANVSS. Residue Gln-169 coordinates 3,4-dihydroxybenzoate. A helical membrane pass occupies residues 199-219; the sequence is LLSLCLLGVTVVLAVLCWAFI. At 220-550 the chain is on the cytoplasmic side; sequence AQRVLHPLRE…MTALVGRFKV (331 aa). In terms of domain architecture, HAMP spans 221 to 273; that stretch reads QRVLHPLREAGGHFRRIASGDLSVPVQGQGNNEIGQLFHELQRMQQSQRDTLG. Residues 278-514 enclose the Methyl-accepting transducer domain; sequence CARQLDAAAT…EVDRNLLNIR (237 aa).

The protein belongs to the methyl-accepting chemotaxis (MCP) protein family. In terms of assembly, ligand free PcaY_PP-ligand-binding domain (LBD) is present in a monomer-dimer equilibrium. Only the dimeric LBD is able to bind ligands which in turn causes dimer stabilization.

Its subcellular location is the cell inner membrane. Its function is as follows. Chemotactic-signal transducers respond to changes in the concentration of attractants and repellents in the environment, transduce a signal from the outside to the inside of the cell, and facilitate sensory adaptation through the variation of the level of methylation. PcaY recognizes a wide range of compounds containing a C6-membered ring with a carboxylate group. Binds preferentially compounds that serve as carbon sources and among them those that rapidly promote growth. Tightest binding compounds are quinate, shikimate, 3-dehydroshikimate and protocatechuate, which are at the interception of the biosynthetic shikimate and catabolic quinate pathways. This chain is Methyl-accepting chemotaxis protein PcaY, found in Pseudomonas putida (strain ATCC 47054 / DSM 6125 / CFBP 8728 / NCIMB 11950 / KT2440).